Reading from the N-terminus, the 159-residue chain is Transcriptional repressor NrdR (159 aa).

The interval 1-21 (MRCPKCQHNKSNVIDSRQAED) is disordered. Residues 3 to 34 (CPKCQHNKSNVIDSRQAEDGNTIRRRRECDAC) fold into a zinc finger. The ATP-cone domain occupies 49–139 (LLVVKKDGTR…VYRSFKDVDE (91 aa)).

The protein belongs to the NrdR family. Zn(2+) serves as cofactor.

Functionally, negatively regulates transcription of bacterial ribonucleotide reductase nrd genes and operons by binding to NrdR-boxes. In Streptococcus thermophilus (strain ATCC BAA-491 / LMD-9), this protein is Transcriptional repressor NrdR.